We begin with the raw amino-acid sequence, 389 residues long: Fructose-1,6-bisphosphate aldolase/phosphatase (389 aa).

Catalysis depends on Asp17, which acts as the Proton acceptor; for FBP phosphatase activity. Asp17, His24, Asp57, and Asp58 together coordinate Mg(2+). Position 24 (His24) interacts with beta-D-fructose 1,6-bisphosphate. Dihydroxyacetone phosphate is bound at residue His24. A beta-D-fructose 1,6-bisphosphate-binding site is contributed by Tyr95. Residue Gln99 participates in Mg(2+) binding. Beta-D-fructose 1,6-bisphosphate is bound at residue 108 to 109; it reads GN. Residue Asp136 coordinates Mg(2+). Lys137 serves as a coordination point for beta-D-fructose 1,6-bisphosphate. Residue Lys137 participates in dihydroxyacetone phosphate binding. Tyr233 acts as the Proton donor/acceptor; for FBP aldolase activity in catalysis. Mg(2+)-binding residues include Lys236, Asp237, and Asp238. Lys236 functions as the Schiff-base intermediate with DHAP; for FBP aldolase activity in the catalytic mechanism. Residues 246 to 247, Arg270, Asp291, and Tyr352 each bind beta-D-fructose 1,6-bisphosphate; that span reads QS. Positions 270 and 291 each coordinate dihydroxyacetone phosphate.

The protein belongs to the FBP aldolase/phosphatase family. Homooctamer; dimer of tetramers. It depends on Mg(2+) as a cofactor.

The enzyme catalyses beta-D-fructose 1,6-bisphosphate + H2O = beta-D-fructose 6-phosphate + phosphate. It catalyses the reaction beta-D-fructose 1,6-bisphosphate = D-glyceraldehyde 3-phosphate + dihydroxyacetone phosphate. It participates in carbohydrate biosynthesis; gluconeogenesis. Functionally, catalyzes two subsequent steps in gluconeogenesis: the aldol condensation of dihydroxyacetone phosphate (DHAP) and glyceraldehyde-3-phosphate (GA3P) to fructose-1,6-bisphosphate (FBP), and the dephosphorylation of FBP to fructose-6-phosphate (F6P). This chain is Fructose-1,6-bisphosphate aldolase/phosphatase, found in Methanocaldococcus jannaschii (strain ATCC 43067 / DSM 2661 / JAL-1 / JCM 10045 / NBRC 100440) (Methanococcus jannaschii).